Reading from the N-terminus, the 98-residue chain is Pore-forming peptide amoebapore A (98 aa).

A signal peptide spans 1 to 21; it reads MKAIVFVLIFAVAFAVTATHQ. Positions 22-98 constitute a Saposin B-type domain; sequence GEILCNLCTG…NAICAKIHAC (77 aa). Disulfide bonds link cysteine 26–cysteine 98, cysteine 29–cysteine 92, and cysteine 56–cysteine 67.

In terms of assembly, monomer (at pH below 4 and pH above 6). Homodimer (at pH 4-6). Hexamer; formed during insertion in the membrane.

The protein localises to the cytoplasmic granule. Forms pores in the cell membrane of host cells. Has antibacterial activity against M.luteus, no activity against E.coli. Implicated in the cytolytic activity of the parasite. This is Pore-forming peptide amoebapore A from Entamoeba histolytica (strain ATCC 30459 / HM-1:IMSS / ABRM).